A 442-amino-acid polypeptide reads, in one-letter code: MKAVLPDSKIPKRWYNILPDLPEPLAPPLDPETDEPMEPEKLLRIFAEELVKQEMSTDRYIEIPKEVREIYSKIGRPTPLFRATNLERALGTPARIYFKYEGATVTGSHKINTALAQAYYAKRQGIERLVTETGAGQWGTALSLAGALLGLNVRVYMARASYQQKPYRKTIMRLYGAEIYPSPSDRTEIGRKFLAEDPNHPGGLGIAISEAIEDVLRDEKARYALGSVLNHVLMHQTVIGLEAQEQMKEFEEPDVIIGCVGGGSNFAGLAYPFVRDVLKGEAEYEFIAVEPKAAPSMTRGVYKYDYGDSGGYTPKMKMHTLGHTYYVPPIHAGGLRYHGLAPTLSVLINHGIVKPVAYHQNEVFQAAHLFAKTEGIVPAPESAHAIKGAIDRALEAKREGREEVILFNLSGHGFLDLKGYEDYLDGKLEDYEPEHFPALDNY.

The residue at position 110 (Lys-110) is an N6-(pyridoxal phosphate)lysine.

This sequence belongs to the TrpB family. As to quaternary structure, tetramer of two alpha and two beta chains. The cofactor is pyridoxal 5'-phosphate.

It carries out the reaction (1S,2R)-1-C-(indol-3-yl)glycerol 3-phosphate + L-serine = D-glyceraldehyde 3-phosphate + L-tryptophan + H2O. The protein operates within amino-acid biosynthesis; L-tryptophan biosynthesis; L-tryptophan from chorismate: step 5/5. Functionally, the beta subunit is responsible for the synthesis of L-tryptophan from indole and L-serine. The protein is Tryptophan synthase beta chain 2 of Thermococcus kodakarensis (strain ATCC BAA-918 / JCM 12380 / KOD1) (Pyrococcus kodakaraensis (strain KOD1)).